The primary structure comprises 255 residues: MQFDVVTLFPDMFRALTDWGITSRAAKQERYALRTWNPRDFTTDNYRTIDDRPYGGGPGMVMLAKPLEDAIGAAKAAQAEQGIGASRVVMMSPQGATLNHDRVMQFAAEPGLILLCGRYEAIDQRLLDRVVDEEVSLGDFVLSGGELPAMALMDAVVRQLPGVLNDSQSAVQDSFVDVLLDCPHYTRPEEYDGVRVPDVLLGGHHAEIEAWRRREALRNTLKKRPDLIVKARRNKMLSRADEAWLASLAKEESKA.

Residues G117 and 137-142 (LGDFVL) contribute to the S-adenosyl-L-methionine site.

It belongs to the RNA methyltransferase TrmD family. In terms of assembly, homodimer.

Its subcellular location is the cytoplasm. It carries out the reaction guanosine(37) in tRNA + S-adenosyl-L-methionine = N(1)-methylguanosine(37) in tRNA + S-adenosyl-L-homocysteine + H(+). In terms of biological role, specifically methylates guanosine-37 in various tRNAs. The protein is tRNA (guanine-N(1)-)-methyltransferase of Paraburkholderia phytofirmans (strain DSM 17436 / LMG 22146 / PsJN) (Burkholderia phytofirmans).